A 327-amino-acid polypeptide reads, in one-letter code: Malate dehydrogenase (327 aa).

12-18 contributes to the NAD(+) binding site; sequence GAAGQIC. Residues Arg-92 and Arg-98 each contribute to the substrate site. NAD(+) contacts are provided by residues Asn-105, Gln-112, and 129-131; that span reads TGN. Asn-131 and Arg-162 together coordinate substrate. Residue His-187 is the Proton acceptor of the active site.

It belongs to the LDH/MDH superfamily. MDH type 2 family.

It carries out the reaction (S)-malate + NAD(+) = oxaloacetate + NADH + H(+). Its function is as follows. Catalyzes the reversible oxidation of malate to oxaloacetate. This chain is Malate dehydrogenase, found in Cutibacterium acnes (strain DSM 16379 / KPA171202) (Propionibacterium acnes).